A 343-amino-acid polypeptide reads, in one-letter code: MKRKCQDYESRLPDNTAVKQQQLPAFRLQLTASEILSGFFAIGLFCLGMGIILLLSAKSIKEVEINYTEKCATCAKLREEATNFDKECNCSISFYLPQKMEGNVYLYYKLYGFYQNLYRYILSRSNIQLVGADVKDVRNCAPFRTSDNGLPIAPCGAIANSMFNDTIVLWYNFNSSTHIRVPMVRTETAWWTDKYVKFQNPAFQNLSSAFAGTAKPPNWPKPVYELDENDPGNNGFINDDFIVWMRTAAFPNFKKLYRRLHRIGNFTEGLPAGSYSFIINYNFPVSRFQGQKAVVLSTLTWSGGSSLFLALAYLVTGAVTLLASFSMMALHLKLKERKTFFLQ.

Residues 1-34 (MKRKCQDYESRLPDNTAVKQQQLPAFRLQLTASE) are Cytoplasmic-facing. A helical transmembrane segment spans residues 35-55 (ILSGFFAIGLFCLGMGIILLL). The Extracellular portion of the chain corresponds to 56–306 (SAKSIKEVEI…STLTWSGGSS (251 aa)). 4 N-linked (GlcNAc...) asparagine glycosylation sites follow: Asn66, Asn164, Asn205, and Asn265. The helical transmembrane segment at 307-327 (LFLALAYLVTGAVTLLASFSM) threads the bilayer. The Cytoplasmic portion of the chain corresponds to 328–343 (MALHLKLKERKTFFLQ).

The protein belongs to the CDC50/LEM3 family.

The protein resides in the membrane. This chain is Cell cycle control protein 50C (TMEM30C), found in Bos taurus (Bovine).